The sequence spans 162 residues: Shikimate kinase (162 aa).

11–16 (GSGKSS) contacts ATP. Serine 15 serves as a coordination point for Mg(2+). Positions 33, 57, and 80 each coordinate substrate. Residue arginine 116 participates in ATP binding. A substrate-binding site is contributed by arginine 132.

Belongs to the shikimate kinase family. Monomer. It depends on Mg(2+) as a cofactor.

It localises to the cytoplasm. The enzyme catalyses shikimate + ATP = 3-phosphoshikimate + ADP + H(+). It functions in the pathway metabolic intermediate biosynthesis; chorismate biosynthesis; chorismate from D-erythrose 4-phosphate and phosphoenolpyruvate: step 5/7. Catalyzes the specific phosphorylation of the 3-hydroxyl group of shikimic acid using ATP as a cosubstrate. This Helicobacter pylori (strain HPAG1) protein is Shikimate kinase.